Consider the following 327-residue polypeptide: tRNA-dihydrouridine(20/20a) synthase (327 aa).

Residues 11 to 13 and Q63 contribute to the FMN site; that span reads PML. C93 (proton donor) is an active-site residue. FMN is bound by residues K132, H165, 205 to 207, and 227 to 228; these read NGG and GR.

The protein belongs to the Dus family. DusA subfamily. FMN serves as cofactor.

It catalyses the reaction 5,6-dihydrouridine(20) in tRNA + NADP(+) = uridine(20) in tRNA + NADPH + H(+). It carries out the reaction 5,6-dihydrouridine(20) in tRNA + NAD(+) = uridine(20) in tRNA + NADH + H(+). The catalysed reaction is 5,6-dihydrouridine(20a) in tRNA + NADP(+) = uridine(20a) in tRNA + NADPH + H(+). The enzyme catalyses 5,6-dihydrouridine(20a) in tRNA + NAD(+) = uridine(20a) in tRNA + NADH + H(+). In terms of biological role, catalyzes the synthesis of 5,6-dihydrouridine (D), a modified base found in the D-loop of most tRNAs, via the reduction of the C5-C6 double bond in target uridines. Specifically modifies U20 and U20a in tRNAs. This chain is tRNA-dihydrouridine(20/20a) synthase, found in Vibrio cholerae serotype O1 (strain ATCC 39315 / El Tor Inaba N16961).